Reading from the N-terminus, the 475-residue chain is Ribulose bisphosphate carboxylase large chain (475 aa).

Residues 1-2 (MS) constitute a propeptide that is removed on maturation. An N-acetylproline modification is found at Pro3. An N6,N6,N6-trimethyllysine modification is found at Lys14. Residues Asn123 and Thr173 each contribute to the substrate site. The active-site Proton acceptor is Lys175. Lys177 is a substrate binding site. The Mg(2+) site is built by Lys201, Asp203, and Glu204. Lys201 carries the N6-carboxylysine modification. The active-site Proton acceptor is His294. Residues Arg295, His327, and Ser379 each coordinate substrate.

This sequence belongs to the RuBisCO large chain family. Type I subfamily. In terms of assembly, heterohexadecamer of 8 large chains and 8 small chains; disulfide-linked. The disulfide link is formed within the large subunit homodimers. Mg(2+) is required as a cofactor. The disulfide bond which can form in the large chain dimeric partners within the hexadecamer appears to be associated with oxidative stress and protein turnover.

It localises to the plastid. The protein localises to the chloroplast. It carries out the reaction 2 (2R)-3-phosphoglycerate + 2 H(+) = D-ribulose 1,5-bisphosphate + CO2 + H2O. It catalyses the reaction D-ribulose 1,5-bisphosphate + O2 = 2-phosphoglycolate + (2R)-3-phosphoglycerate + 2 H(+). Its function is as follows. RuBisCO catalyzes two reactions: the carboxylation of D-ribulose 1,5-bisphosphate, the primary event in carbon dioxide fixation, as well as the oxidative fragmentation of the pentose substrate in the photorespiration process. Both reactions occur simultaneously and in competition at the same active site. The sequence is that of Ribulose bisphosphate carboxylase large chain from Mesostigma viride (Green alga).